The following is a 434-amino-acid chain: Gamma-glutamyl phosphate reductase (434 aa).

The protein belongs to the gamma-glutamyl phosphate reductase family.

Its subcellular location is the cytoplasm. The catalysed reaction is L-glutamate 5-semialdehyde + phosphate + NADP(+) = L-glutamyl 5-phosphate + NADPH + H(+). It participates in amino-acid biosynthesis; L-proline biosynthesis; L-glutamate 5-semialdehyde from L-glutamate: step 2/2. Catalyzes the NADPH-dependent reduction of L-glutamate 5-phosphate into L-glutamate 5-semialdehyde and phosphate. The product spontaneously undergoes cyclization to form 1-pyrroline-5-carboxylate. In Rhodopirellula baltica (strain DSM 10527 / NCIMB 13988 / SH1), this protein is Gamma-glutamyl phosphate reductase.